The chain runs to 687 residues: Elongation factor G (687 aa).

The 275-residue stretch at N8–L282 folds into the tr-type G domain. Residues A17 to T24, D81 to H85, and N135 to D138 contribute to the GTP site.

Belongs to the TRAFAC class translation factor GTPase superfamily. Classic translation factor GTPase family. EF-G/EF-2 subfamily.

Its subcellular location is the cytoplasm. Its function is as follows. Catalyzes the GTP-dependent ribosomal translocation step during translation elongation. During this step, the ribosome changes from the pre-translocational (PRE) to the post-translocational (POST) state as the newly formed A-site-bound peptidyl-tRNA and P-site-bound deacylated tRNA move to the P and E sites, respectively. Catalyzes the coordinated movement of the two tRNA molecules, the mRNA and conformational changes in the ribosome. This Clostridium novyi (strain NT) protein is Elongation factor G.